The chain runs to 577 residues: Proline--tRNA ligase (577 aa).

This sequence belongs to the class-II aminoacyl-tRNA synthetase family. ProS type 1 subfamily. In terms of assembly, homodimer.

The protein localises to the cytoplasm. It catalyses the reaction tRNA(Pro) + L-proline + ATP = L-prolyl-tRNA(Pro) + AMP + diphosphate. Functionally, catalyzes the attachment of proline to tRNA(Pro) in a two-step reaction: proline is first activated by ATP to form Pro-AMP and then transferred to the acceptor end of tRNA(Pro). As ProRS can inadvertently accommodate and process non-cognate amino acids such as alanine and cysteine, to avoid such errors it has two additional distinct editing activities against alanine. One activity is designated as 'pretransfer' editing and involves the tRNA(Pro)-independent hydrolysis of activated Ala-AMP. The other activity is designated 'posttransfer' editing and involves deacylation of mischarged Ala-tRNA(Pro). The misacylated Cys-tRNA(Pro) is not edited by ProRS. The sequence is that of Proline--tRNA ligase from Herminiimonas arsenicoxydans.